Here is a 567-residue protein sequence, read N- to C-terminus: Hexose transporter HXT11 (567 aa).

Over residues 1 to 22 (MSGVNNTSANELSTTMSNSNSA) the composition is skewed to polar residues. The tract at residues 1-45 (MSGVNNTSANELSTTMSNSNSAVGAPSVKTEHGDSKNSLNLDANE) is disordered. Topologically, residues 1-56 (MSGVNNTSANELSTTMSNSNSAVGAPSVKTEHGDSKNSLNLDANEPPIDLPQKPLS) are cytoplasmic. Residues 57 to 77 (AYTTVAILCLMIAFGGFIFGW) form a helical membrane-spanning segment. At 78 to 112 (DTGTISGFVNLSDFIRRFGQKNDKGTYYLSKVRMG) the chain is on the extracellular side. Residue N87 is glycosylated (N-linked (GlcNAc...) asparagine). Residues 113–133 (LIVSIFNIGCAIGGIVLSKVG) traverse the membrane as a helical segment. Topologically, residues 134-139 (DIYGRR) are cytoplasmic. A helical transmembrane segment spans residues 140-160 (IGLITVTAIYVVGILIQITSI). Residues 161–170 (NKWYQYFIGR) are Extracellular-facing. Residues 171–191 (IISGLGVGGIAVLSPMLISEV) form a helical membrane-spanning segment. Residues 192–197 (APKHIR) are Cytoplasmic-facing. A helical membrane pass occupies residues 198–218 (GTLVQLYQLMGTMGIFLGYCT). Residues 219-232 (NYGTKNYHNATQWR) are Extracellular-facing. Residue N227 is glycosylated (N-linked (GlcNAc...) asparagine). Residues 233–253 (VGLGLCFAWATFMVSGMMFVP) traverse the membrane as a helical segment. Residues 254 to 336 (ESPRYLIEVG…IQSLQQLTGD (83 aa)) lie on the Cytoplasmic side of the membrane. A helical membrane pass occupies residues 337–353 (NYFFYYGTTIFKSVGLK). Topologically, residues 354-359 (DSFQTS) are extracellular. A helical transmembrane segment spans residues 360-377 (IIIGVVNFFSSFIAVYTI). Residues 378-384 (ERFGRRT) lie on the Cytoplasmic side of the membrane. The chain crosses the membrane as a helical span at residues 385–405 (CLLWGAASMLCCFAVFASVGV). The Extracellular segment spans residues 406–429 (TKLWPQGSSHQDITSQGAGNCMIV). The chain crosses the membrane as a helical span at residues 430-450 (FTMFFIFSFATTWAGGCYVIV). Topologically, residues 451-467 (SETFPLRVKSRGMAIAT) are cytoplasmic. A helical membrane pass occupies residues 468 to 488 (AANWMWGFLISFFTPFITGAI). Residue N489 is a topological domain, extracellular. Residues 490-510 (FYYGYVFLGCLVFAYFYVFFF) traverse the membrane as a helical segment. The Cytoplasmic segment spans residues 511 to 567 (VPETKGLTLEEVNTMWLEGVPAWKSASWVPPERRTADYDADAIDHDNRPIYKRFFSS).

This sequence belongs to the major facilitator superfamily. Sugar transporter (TC 2.A.1.1) family.

The protein resides in the membrane. Its function is as follows. Probable glucose transporter. This chain is Hexose transporter HXT11 (HXT11), found in Saccharomyces cerevisiae (strain ATCC 204508 / S288c) (Baker's yeast).